A 334-amino-acid polypeptide reads, in one-letter code: D-alanine--D-alanine ligase (334 aa).

The 197-residue stretch at 110 to 306 (KHVLKSLGID…FDHVVDLIVQ (197 aa)) folds into the ATP-grasp domain. 138–190 (LPYPFVIKPVRGGSTIGVHAIFSKSEYLDLSAHADTLEDRMIVEEYVSGQEVQ) lines the ATP pocket. D258, E272, and N274 together coordinate Mg(2+).

It belongs to the D-alanine--D-alanine ligase family. It depends on Mg(2+) as a cofactor. Mn(2+) serves as cofactor.

It is found in the cytoplasm. The catalysed reaction is 2 D-alanine + ATP = D-alanyl-D-alanine + ADP + phosphate + H(+). The protein operates within cell wall biogenesis; peptidoglycan biosynthesis. Its function is as follows. Cell wall formation. The protein is D-alanine--D-alanine ligase of Anaplasma marginale (strain Florida).